The primary structure comprises 198 residues: Large ribosomal subunit protein bL25 (198 aa).

The protein belongs to the bacterial ribosomal protein bL25 family. CTC subfamily. As to quaternary structure, part of the 50S ribosomal subunit; part of the 5S rRNA/L5/L18/L25 subcomplex. Contacts the 5S rRNA. Binds to the 5S rRNA independently of L5 and L18.

In terms of biological role, this is one of the proteins that binds to the 5S RNA in the ribosome where it forms part of the central protuberance. The polypeptide is Large ribosomal subunit protein bL25 (Gloeothece citriformis (strain PCC 7424) (Cyanothece sp. (strain PCC 7424))).